Consider the following 118-residue polypeptide: Small ribosomal subunit protein uS13 (118 aa).

The interval 95–118 (LPLRGQRTRTNARTRKGPRKAIKK) is disordered.

It belongs to the universal ribosomal protein uS13 family. Part of the 30S ribosomal subunit. Forms a loose heterodimer with protein S19. Forms two bridges to the 50S subunit in the 70S ribosome.

Functionally, located at the top of the head of the 30S subunit, it contacts several helices of the 16S rRNA. In the 70S ribosome it contacts the 23S rRNA (bridge B1a) and protein L5 of the 50S subunit (bridge B1b), connecting the 2 subunits; these bridges are implicated in subunit movement. Contacts the tRNAs in the A and P-sites. The sequence is that of Small ribosomal subunit protein uS13 from Xylella fastidiosa (strain 9a5c).